The chain runs to 901 residues: HTH-type transcriptional regulator MalT (901 aa).

39-46 is an ATP binding site; the sequence is SPAGYGKT. Positions 829–894 constitute an HTH luxR-type domain; the sequence is ELIRTSPLTQ…DAVQHAQQLL (66 aa). The segment at residues 853 to 872 is a DNA-binding region (H-T-H motif); that stretch reads NEQIAGELAVAATTIKTHIR.

Belongs to the MalT family. Monomer in solution. Oligomerizes to an active state in the presence of the positive effectors ATP and maltotriose.

Activated by ATP and maltotriose, which are both required for DNA binding. In terms of biological role, positively regulates the transcription of the maltose regulon whose gene products are responsible for uptake and catabolism of malto-oligosaccharides. Specifically binds to the promoter region of its target genes, recognizing a short DNA motif called the MalT box. In Enterobacter sp. (strain 638), this protein is HTH-type transcriptional regulator MalT.